The chain runs to 147 residues: Delta-latroinsectotoxin-Lhe1a (147 aa).

4 ANK repeats span residues 57–59 (VSI), 66–78 (NNWTPLHFAIYFK), 79–96 (KNPAVSAVLILENKDIEA), and 98–125 (TSIMLIVQKLLLELYNYFINNYAETLDE).

It belongs to the cationic peptide 01 (latrotoxin) family. 04 (delta-latroinsectotoxin) subfamily. Homotetramer in membrane. In terms of tissue distribution, expressed by the venom gland.

Its subcellular location is the secreted. It is found in the target cell membrane. Insecticidal presynaptic neurotoxin that induces massive neurotransmitter release at insect (but not vertebrate) neuromuscular junctions. Native toxin forms cation-permeable pores (with high permeability to calcium) in lipid membranes locust muscle membrane and artificial lipid bilayers. May bind to insect neurexin-1 homolog, insect adhesion G protein-coupled receptor L1 homolog, and insect receptor-type tyrosine-protein phosphatase S homolog, and induces neurotransmitter exocytosis both by forming tetrameric pores in membranes and signaling via G protein-coupled receptor. Oligomerization is a process independent of divalent cations. In Latrodectus hesperus (Western black widow spider), this protein is Delta-latroinsectotoxin-Lhe1a.